A 212-amino-acid polypeptide reads, in one-letter code: uncharacterized protein (212 aa).

The protein belongs to the methyltransferase superfamily.

This is an uncharacterized protein from Synechocystis sp. (strain ATCC 27184 / PCC 6803 / Kazusa).